We begin with the raw amino-acid sequence, 131 residues long: Large ribosomal subunit protein uL22 (131 aa).

Over residues 1–11 (MAKGHRSKIKR) the composition is skewed to basic residues. Residues 1-20 (MAKGHRSKIKRERNEVRDTR) are disordered.

The protein belongs to the universal ribosomal protein uL22 family. In terms of assembly, part of the 50S ribosomal subunit.

This protein binds specifically to 23S rRNA; its binding is stimulated by other ribosomal proteins, e.g. L4, L17, and L20. It is important during the early stages of 50S assembly. It makes multiple contacts with different domains of the 23S rRNA in the assembled 50S subunit and ribosome. Its function is as follows. The globular domain of the protein is located near the polypeptide exit tunnel on the outside of the subunit, while an extended beta-hairpin is found that lines the wall of the exit tunnel in the center of the 70S ribosome. The sequence is that of Large ribosomal subunit protein uL22 from Agathobacter rectalis (strain ATCC 33656 / DSM 3377 / JCM 17463 / KCTC 5835 / VPI 0990) (Eubacterium rectale).